Reading from the N-terminus, the 388-residue chain is S-adenosylmethionine synthase (388 aa).

Position 16 (His-16) interacts with ATP. Asp-18 lines the Mg(2+) pocket. Residue Glu-44 participates in K(+) binding. Positions 57 and 100 each coordinate L-methionine. Positions 100–110 (QSPEIAQGVDR) are flexible loop. Residues 165–167 (DAK), Asp-240, 246–247 (RK), Ala-263, and Lys-267 contribute to the ATP site. Asp-240 provides a ligand contact to L-methionine. Residue Lys-271 participates in L-methionine binding.

The protein belongs to the AdoMet synthase family. In terms of assembly, homotetramer; dimer of dimers. Requires Mg(2+) as cofactor. It depends on K(+) as a cofactor.

The protein resides in the cytoplasm. The catalysed reaction is L-methionine + ATP + H2O = S-adenosyl-L-methionine + phosphate + diphosphate. The protein operates within amino-acid biosynthesis; S-adenosyl-L-methionine biosynthesis; S-adenosyl-L-methionine from L-methionine: step 1/1. In terms of biological role, catalyzes the formation of S-adenosylmethionine (AdoMet) from methionine and ATP. The overall synthetic reaction is composed of two sequential steps, AdoMet formation and the subsequent tripolyphosphate hydrolysis which occurs prior to release of AdoMet from the enzyme. This is S-adenosylmethionine synthase from Acinetobacter baumannii (strain ACICU).